A 214-amino-acid polypeptide reads, in one-letter code: Thiamine-phosphate synthase (214 aa).

4-amino-2-methyl-5-(diphosphooxymethyl)pyrimidine-binding positions include 37–41 and asparagine 73; that span reads QYREK. Mg(2+) is bound by residues aspartate 74 and aspartate 93. Serine 112 serves as a coordination point for 4-amino-2-methyl-5-(diphosphooxymethyl)pyrimidine. 139 to 141 provides a ligand contact to 2-[(2R,5Z)-2-carboxy-4-methylthiazol-5(2H)-ylidene]ethyl phosphate; sequence TIS. 4-amino-2-methyl-5-(diphosphooxymethyl)pyrimidine is bound at residue lysine 142. Residues glycine 171 and 191–192 each bind 2-[(2R,5Z)-2-carboxy-4-methylthiazol-5(2H)-ylidene]ethyl phosphate; that span reads IS.

This sequence belongs to the thiamine-phosphate synthase family. Requires Mg(2+) as cofactor.

The enzyme catalyses 2-[(2R,5Z)-2-carboxy-4-methylthiazol-5(2H)-ylidene]ethyl phosphate + 4-amino-2-methyl-5-(diphosphooxymethyl)pyrimidine + 2 H(+) = thiamine phosphate + CO2 + diphosphate. It catalyses the reaction 2-(2-carboxy-4-methylthiazol-5-yl)ethyl phosphate + 4-amino-2-methyl-5-(diphosphooxymethyl)pyrimidine + 2 H(+) = thiamine phosphate + CO2 + diphosphate. The catalysed reaction is 4-methyl-5-(2-phosphooxyethyl)-thiazole + 4-amino-2-methyl-5-(diphosphooxymethyl)pyrimidine + H(+) = thiamine phosphate + diphosphate. It functions in the pathway cofactor biosynthesis; thiamine diphosphate biosynthesis; thiamine phosphate from 4-amino-2-methyl-5-diphosphomethylpyrimidine and 4-methyl-5-(2-phosphoethyl)-thiazole: step 1/1. In terms of biological role, condenses 4-methyl-5-(beta-hydroxyethyl)thiazole monophosphate (THZ-P) and 2-methyl-4-amino-5-hydroxymethyl pyrimidine pyrophosphate (HMP-PP) to form thiamine monophosphate (TMP). In Listeria monocytogenes serotype 4b (strain F2365), this protein is Thiamine-phosphate synthase.